The sequence spans 325 residues: Probable tRNA pseudouridine synthase B (325 aa).

The Nucleophile role is filled by aspartate 71. One can recognise a PUA domain in the interval 238-313 (LPKIYVKDSA…VAASIERVIM (76 aa)).

It belongs to the pseudouridine synthase TruB family. Type 2 subfamily.

It catalyses the reaction uridine(55) in tRNA = pseudouridine(55) in tRNA. Functionally, could be responsible for synthesis of pseudouridine from uracil-55 in the psi GC loop of transfer RNAs. The polypeptide is Probable tRNA pseudouridine synthase B (Korarchaeum cryptofilum (strain OPF8)).